Consider the following 135-residue polypeptide: ATP synthase epsilon chain, chloroplastic (135 aa).

Belongs to the ATPase epsilon chain family. F-type ATPases have 2 components, CF(1) - the catalytic core - and CF(0) - the membrane proton channel. CF(1) has five subunits: alpha(3), beta(3), gamma(1), delta(1), epsilon(1). CF(0) has three main subunits: a, b and c.

It localises to the plastid. The protein localises to the chloroplast thylakoid membrane. Produces ATP from ADP in the presence of a proton gradient across the membrane. The polypeptide is ATP synthase epsilon chain, chloroplastic (Marchantia polymorpha (Common liverwort)).